The primary structure comprises 205 residues: Ribonuclease HII (205 aa).

One can recognise an RNase H type-2 domain in the interval 14-201 (EIVAGVDEAG…KGNINHSAIL (188 aa)). Residues aspartate 20, glutamate 21, and aspartate 111 each contribute to the a divalent metal cation site.

It belongs to the RNase HII family. The cofactor is Mn(2+). Requires Mg(2+) as cofactor.

It localises to the cytoplasm. It catalyses the reaction Endonucleolytic cleavage to 5'-phosphomonoester.. Its function is as follows. Endonuclease that specifically degrades the RNA of RNA-DNA hybrids. The chain is Ribonuclease HII from Orientia tsutsugamushi (strain Boryong) (Rickettsia tsutsugamushi).